We begin with the raw amino-acid sequence, 545 residues long: uncharacterized protein (545 aa).

Basic and acidic residues-rich tracts occupy residues 34-44 and 53-63; these read PMNKQNEKLKT and PRNDYSRRVSR. Disordered regions lie at residues 34 to 98, 269 to 296, and 415 to 444; these read PMNK…PESN, QNGTAGYSNSRKTSSPSYHKQSIPPQDS, and ERPQRKTEHVKTPEENLQTKNPTTMTSAPE. A compositionally biased stretch (polar residues) spans 69-78; it reads TDSSEQQITA. A compositionally biased stretch (basic and acidic residues) spans 415–428; sequence ERPQRKTEHVKTPE. Residues 429–441 show a composition bias toward polar residues; it reads ENLQTKNPTTMTS.

This is an uncharacterized protein from Mus musculus (Mouse).